The following is a 327-amino-acid chain: Lipoyl synthase (327 aa).

Residues C72, C77, C83, C98, C102, C105, and S313 each coordinate [4Fe-4S] cluster. Residues 83–302 (CWSHGTATIM…RKVGLEKGFL (220 aa)) enclose the Radical SAM core domain.

It belongs to the radical SAM superfamily. Lipoyl synthase family. Requires [4Fe-4S] cluster as cofactor.

Its subcellular location is the cytoplasm. The enzyme catalyses [[Fe-S] cluster scaffold protein carrying a second [4Fe-4S](2+) cluster] + N(6)-octanoyl-L-lysyl-[protein] + 2 oxidized [2Fe-2S]-[ferredoxin] + 2 S-adenosyl-L-methionine + 4 H(+) = [[Fe-S] cluster scaffold protein] + N(6)-[(R)-dihydrolipoyl]-L-lysyl-[protein] + 4 Fe(3+) + 2 hydrogen sulfide + 2 5'-deoxyadenosine + 2 L-methionine + 2 reduced [2Fe-2S]-[ferredoxin]. It functions in the pathway protein modification; protein lipoylation via endogenous pathway; protein N(6)-(lipoyl)lysine from octanoyl-[acyl-carrier-protein]: step 2/2. Its function is as follows. Catalyzes the radical-mediated insertion of two sulfur atoms into the C-6 and C-8 positions of the octanoyl moiety bound to the lipoyl domains of lipoate-dependent enzymes, thereby converting the octanoylated domains into lipoylated derivatives. The polypeptide is Lipoyl synthase (Francisella tularensis subsp. novicida (strain U112)).